We begin with the raw amino-acid sequence, 771 residues long: Polymeric immunoglobulin receptor (771 aa).

A signal peptide spans 1–18 (MRLYLFTLLVTVFSGVST). Topologically, residues 19–645 (KSPIFGPQEV…DGQSRSSSSK (627 aa)) are extracellular. One can recognise an Ig-like V-type 1; required for binding to polymeric IgA and IgM domain in the interval 21 to 120 (PIFGPQEVSS…GLGTSNRGLS (100 aa)). Residues cysteine 40 and cysteine 110 are joined by a disulfide bond. N-linked (GlcNAc...) asparagine glycans are attached at residues asparagine 90, asparagine 147, asparagine 170, and asparagine 206. 4 Ig-like V-type domains span residues 135–237 (SDTH…DLQV), 245–351 (LYKD…ESTI), 352–457 (PNRR…LQVA), and 463–563 (PNLE…IYIA). 3 disulfide bridges follow: cysteine 152/cysteine 220, cysteine 257/cysteine 324, and cysteine 370/cysteine 440. Asparagine 420 and asparagine 471 each carry an N-linked (GlcNAc...) asparagine glycan. A disulfide bridge links cysteine 484 with cysteine 546. Residues 622 to 641 (QAQENRASGDAGSADGQSRS) form a disordered region. Positions 627-641 (RASGDAGSADGQSRS) are enriched in low complexity. Residues 646-668 (VLFSTLVPLGLVLAVGAIAVWVA) traverse the membrane as a helical segment. Topologically, residues 669-771 (RVRHRKNVDR…AQVHDGPQEA (103 aa)) are cytoplasmic. A phosphoserine mark is found at serine 680, serine 689, serine 696, and serine 742.

Interacts (mainly via CDR1-like domain) with dimeric IgA. Interacts (mainly via CDR2-like domain) with pentameric IgM. In terms of assembly, either free or part of the secretory IgA (sIgA) complex that consists of two, four or five IgA monomers, and two additional non-Ig polypeptides, namely the JCHAIN and the secretory component (the proteolytic product of PIGR). Free secretory component interacts with bacterial antigens toxA of C.difficile and eae of E.coli. In terms of processing, N-glycosylated. N-glycosylation is required for anchoring IgA molecules to mucus, but is not necessary for Ig binding.

Its subcellular location is the cell membrane. The protein localises to the secreted. Functionally, mediates selective transcytosis of polymeric IgA and IgM across mucosal epithelial cells. Binds polymeric IgA and IgM at the basolateral surface of epithelial cells. The complex is then transported across the cell to be secreted at the apical surface. During this process, a cleavage occurs that separates the extracellular (known as the secretory component) from the transmembrane segment. Its function is as follows. Through its N-linked glycans ensures anchoring of secretory IgA (sIgA) molecules to mucus lining the epithelial surface to neutralize extracellular pathogens. On its own (free form) may act as a non-specific microbial scavenger to prevent pathogen interaction with epithelial cells. In Mus musculus (Mouse), this protein is Polymeric immunoglobulin receptor (Pigr).